A 201-amino-acid polypeptide reads, in one-letter code: Ras-related protein Rab-9A (201 aa).

At Ala-2 the chain carries N-acetylalanine. Gly-17 is a binding site for GDP. GTP contacts are provided by Gly-17, Val-18, Gly-19, Lys-20, Ser-21, Ser-22, Thr-34, His-38, and Thr-39. GDP is bound by residues Gly-19, Lys-20, Ser-21, and Ser-22. Residue Ser-21 participates in Mg(2+) binding. The short motif at 31–42 (KFDTQLFHTIGV) is the Switch 1 element. Mg(2+) contacts are provided by Thr-39 and Asp-62. The Switch 2 motif lies at 64–78 (AGQERFRSLRTPFYR). 6 residues coordinate GTP: Gly-65, Asn-124, Lys-125, Asp-127, Ala-155, and Lys-156. GDP-binding residues include Asn-124, Lys-125, Asp-127, Ala-155, and Lys-156. Position 179 is a phosphoserine (Ser-179). A Phosphothreonine modification is found at Thr-187. Residues Cys-200 and Cys-201 are each lipidated (S-geranylgeranyl cysteine).

The protein belongs to the small GTPase superfamily. Rab family. As to quaternary structure, interacts (preferentially in its GTP-bound form) with GCC2 (via its GRIP domain). Interacts (GTP-bound form) with SGSM1; the GDP-bound form has much lower affinity for SGSM1. Interacts with SGSM2. The GTP-bound form but not the GDP-bound form interacts with HPS4 and BLOC-3 complex (heterodimer of HPS1 and HPS4) but does not interact with HPS1 alone. Interacts (GTP-bound form) with NDE1; two RAB9A-GTP molecules lie on the opposite sides of the NDE1 homodimer; the interaction leads to RAB9A-dynein motor tethering. Interacts (GTP-bound form) with NDEL1. The cofactor is Mg(2+).

It is found in the cell membrane. The protein resides in the endoplasmic reticulum membrane. It localises to the golgi apparatus membrane. The protein localises to the late endosome. Its subcellular location is the cytoplasmic vesicle. It is found in the phagosome membrane. The protein resides in the phagosome. It localises to the cytoplasmic vesicle membrane. The protein localises to the melanosome. The enzyme catalyses GTP + H2O = GDP + phosphate + H(+). Regulated by guanine nucleotide exchange factors (GEFs) which promote the exchange of bound GDP for free GTP. Regulated by GTPase activating proteins (GAPs) which increase the GTP hydrolysis activity. Inhibited by GDP dissociation inhibitors (GDIs). The small GTPases Rab are key regulators of intracellular membrane trafficking, from the formation of transport vesicles to their fusion with membranes. Rabs cycle between an inactive GDP-bound form and an active GTP-bound form that is able to recruit to membranes different sets of downstream effectors directly responsible for vesicle formation, movement, tethering and fusion. RAB9A is involved in the transport of proteins between the endosomes and the trans-Golgi network (TGN). Specifically uses NDE1/NDEL1 as an effector to interact with the dynein motor complex in order to control retrograde trafficking of RAB9-associated late endosomes to the TGN. Involved in the recruitment of SGSM2 to melanosomes and is required for the proper trafficking of melanogenic enzymes TYR, TYRP1 and DCT/TYRP2 to melanosomes in melanocytes. The sequence is that of Ras-related protein Rab-9A from Homo sapiens (Human).